A 253-amino-acid chain; its full sequence is Sulfate transporter CysZ (253 aa).

A run of 4 helical transmembrane segments spans residues 31–51 (FVIL…WWLF), 75–95 (LLWP…FSTI), 151–171 (IVLL…PVLW), and 222–242 (IPLL…AMWV).

This sequence belongs to the CysZ family.

It is found in the cell inner membrane. In terms of biological role, high affinity, high specificity proton-dependent sulfate transporter, which mediates sulfate uptake. Provides the sulfur source for the cysteine synthesis pathway. In Escherichia coli O7:K1 (strain IAI39 / ExPEC), this protein is Sulfate transporter CysZ.